The chain runs to 1198 residues: Spindle-defective protein 5 (1198 aa).

The span at Met-1–Asp-10 shows a compositional bias: polar residues. Residues Met-1 to Gln-45 are disordered. Coiled coils occupy residues Glu-67–Gly-381, His-566–Ile-603, Lys-694–Ser-916, Asp-983–Pro-1035, and Lys-1127–Asp-1175.

It localises to the cytoplasm. Its subcellular location is the cytoskeleton. The protein resides in the microtubule organizing center. The protein localises to the centrosome. Functionally, plays a central role in centrosome maturation and mitotic spindle assembly during the first division of the zygote. Required for the centrosomal localization of air-1 and zyg-9. Probably not required in late embryogenesis and during larval development. This is Spindle-defective protein 5 (spd-5) from Caenorhabditis elegans.